The following is an 87-amino-acid chain: Ribonuclease P protein component 1 (87 aa).

This sequence belongs to the eukaryotic/archaeal RNase P protein component 1 family. As to quaternary structure, consists of a catalytic RNA component and at least 4-5 protein subunits.

Its subcellular location is the cytoplasm. It carries out the reaction Endonucleolytic cleavage of RNA, removing 5'-extranucleotides from tRNA precursor.. Functionally, part of ribonuclease P, a protein complex that generates mature tRNA molecules by cleaving their 5'-ends. This chain is Ribonuclease P protein component 1, found in Thermoplasma acidophilum (strain ATCC 25905 / DSM 1728 / JCM 9062 / NBRC 15155 / AMRC-C165).